Reading from the N-terminus, the 161-residue chain is Cyclic pyranopterin monophosphate synthase (161 aa).

Substrate is bound by residues 75–77 (LCH) and 113–114 (ME). Residue aspartate 128 is part of the active site.

This sequence belongs to the MoaC family. As to quaternary structure, homohexamer; trimer of dimers.

It catalyses the reaction (8S)-3',8-cyclo-7,8-dihydroguanosine 5'-triphosphate = cyclic pyranopterin phosphate + diphosphate. The protein operates within cofactor biosynthesis; molybdopterin biosynthesis. In terms of biological role, catalyzes the conversion of (8S)-3',8-cyclo-7,8-dihydroguanosine 5'-triphosphate to cyclic pyranopterin monophosphate (cPMP). The sequence is that of Cyclic pyranopterin monophosphate synthase from Citrobacter koseri (strain ATCC BAA-895 / CDC 4225-83 / SGSC4696).